A 454-amino-acid polypeptide reads, in one-letter code: Protein pid-2 (454 aa).

A disordered region spans residues Val-31–Lys-61. The span at Lys-50 to Lys-61 shows a compositional bias: basic and acidic residues.

In terms of assembly, may interact with pid-4, pid-5, app-1 and prmt-5. As to expression, expressed throughout the mitotic and meiotic regions of the germline and in oocytes.

Its subcellular location is the cytoplasm. It localises to the perinuclear region. It is found in the cytoplasmic granule. Functionally, involved in gene silencing mediated by a class of 21 nucleotide PIWI-interacting RNAs (piRNAs) that possess a uracil residue at the 5'-end (also called 21U-RNAs) and that guide the Piwi protein prg-1 to its DNA targets for silencing. Not required for the biogenesis of 21U-RNAs. May also be involved in gene silencing mediated by 22G-siRNAs (a class of 22 nucleotide endogenous small interfering RNAs (siRNAs) that possess a triphosphorylated guanine residue at the 5'-end) and 26G-siRNAs (a class of 26 nucleotide siRNAs that possess a guanine residue at the 5'-end). Required for the biogenesis of secondary and tertiary 22G-siRNAs from many loci. Specifically, promotes the production of 22G-siRNAs from the 5' end of target mRNAs. May play a role in the production of 26G-siRNAs. Plays a role in small RNA-directed transgenerational epigenetic inheritance (also called RNAe) over several generations and germline immortality. Together with the argonaut protein hrde-1, promotes the silencing of the DNA transposable element Tc1. Required for the formation of liquid-like condensates in the cytoplasm called Z granules, playing a role in maintaining their assembly, viscosity and morphology in adult germ cells, and localization in early embryos. The sequence is that of Protein pid-2 from Caenorhabditis elegans.